The following is a 358-amino-acid chain: RNA demethylase ALKBH5 (358 aa).

A disordered region spans residues 1–50 (MSATYTDLREKLQSLYRDSPKEVRKRKQPTSDTEEEEAASEPEEEEEARK). Positions 7–22 (DLREKLQSLYRDSPKE) are enriched in basic and acidic residues. Residues 32–46 (DTEEEEAASEPEEEE) are compositionally biased toward acidic residues. Tyr-105 is an active-site residue. Residues Asn-159, Tyr-161, His-170, His-232, and Arg-243 each coordinate 2-oxoglutarate. An intrachain disulfide couples Cys-196 to Cys-233. 2 disordered regions span residues 259 to 312 (EMKS…RRSV) and 334 to 358 (DYVDTYTETGEDDGSPVRKVKMRRH). Residues 262–278 (SLSSSYQPERLQGSNRQ) show a composition bias toward polar residues. Basic residues predominate over residues 279–288 (HILKPKRSHR). The segment covering 289–310 (KADPDAAHRPRILEMDKEENRR) has biased composition (basic and acidic residues).

Belongs to the alkB family. In terms of assembly, monomer. Requires Fe(2+) as cofactor.

The protein resides in the nucleus speckle. The enzyme catalyses an N(6)-methyladenosine in mRNA + 2-oxoglutarate + O2 = an adenosine in mRNA + formaldehyde + succinate + CO2. Functionally, dioxygenase that specifically demethylates N(6)-methyladenosine (m6A) RNA, the most prevalent internal modification of messenger RNA (mRNA) in higher eukaryotes. Demethylates RNA by oxidative demethylation, which requires molecular oxygen, alpha-ketoglutarate and iron. Demethylation of m6A mRNA affects mRNA processing, translation and export. This Xenopus tropicalis (Western clawed frog) protein is RNA demethylase ALKBH5 (alkbh5).